Reading from the N-terminus, the 388-residue chain is MGPKKSTKMSLNAFLGDESFGSTNWADDIDDLPALPQDRTTSTYRATPSSADAGYNAPSSTFESVRSPPESRREGGMGSGYQRDAIPIPSEPPFTAHVGNLSFDLTENDLGDFFGEGVTSIRLVIDPLTERSRGFGYVEFETADTLSAALALSGEDLMGRPVRITVAEPRRSFAREERSTGDWVRRGPLPPAEPAESPFGKRRTNSGRFRDPARDPSDRVREEPREWVRRGPLPPRESSERPRLNLKPRSSSNVNTEATPSATTTTSSKPKRDPFGGAKPVDNTSVLQRVEEKLAKRTQSFRREDNANRERSTSRKPSADKAEKTDKTDAIAEKVSDIRLGDGEKKSSETDSEVAATKTPATEDAPATNAGEAEEEEGWTKIGKGRKH.

Positions 18–84 (ESFGSTNWAD…GGMGSGYQRD (67 aa)) are disordered. Residues 38–50 (DRTTSTYRATPSS) are compositionally biased toward polar residues. A phosphoserine mark is found at S49, S50, and S60. Position 61 is a phosphothreonine (T61). S64, S67, and S71 each carry phosphoserine. One can recognise an RRM domain in the interval 94–169 (FTAHVGNLSF…RPVRITVAEP (76 aa)). Positions 171–185 (RSFAREERSTGDWVR) are enriched in basic and acidic residues. The tract at residues 171–388 (RSFAREERST…WTKIGKGRKH (218 aa)) is disordered. Position 197 is a phosphoserine (S197). A compositionally biased stretch (basic and acidic residues) spans 208 to 229 (RFRDPARDPSDRVREEPREWVR). Residues 248 to 257 (PRSSSNVNTE) show a composition bias toward polar residues. Residues S250, S251, and S252 each carry the phosphoserine modification. A compositionally biased stretch (low complexity) spans 258–268 (ATPSATTTTSS). Residues 289 to 349 (RVEEKLAKRT…LGDGEKKSSE (61 aa)) are compositionally biased toward basic and acidic residues. S347 is subject to Phosphoserine.

The protein localises to the cytoplasm. This Schizosaccharomyces pombe (strain 972 / ATCC 24843) (Fission yeast) protein is Probable RNA-binding protein sce3 (sce3).